A 341-amino-acid chain; its full sequence is DNA fragmentation factor subunit beta (341 aa).

The 77-residue stretch at 7–83 (KPKTFKLRSL…LLTAGQTWQG (77 aa)) folds into the CIDE-N domain.

In terms of assembly, heterodimer of DFFA and DFFB. Interacts with H1-1.

It localises to the cytoplasm. Its subcellular location is the nucleus. Inhibited by DFFA (DFF45). Interacts with HIST1H1A. In terms of biological role, nuclease that induces DNA fragmentation and chromatin condensation during apoptosis. Degrades naked DNA and induces apoptotic morphology. This chain is DNA fragmentation factor subunit beta (DFFB), found in Bos taurus (Bovine).